The following is a 380-amino-acid chain: Flap endonuclease 1 (380 aa).

Positions 1–104 (MGIHGLAKLI…GELEKRGERR (104 aa)) are N-domain. Residue D34 coordinates Mg(2+). The DNA site is built by R47 and R70. Mg(2+)-binding residues include D86, E158, E160, D179, and D181. Residues 122–253 (NIDKFSKRLV…KRAMDLIRQH (132 aa)) are I-domain. E158 is a DNA binding site. Residues G231 and D233 each coordinate DNA. D233 serves as a coordination point for Mg(2+). The interaction with PCNA stretch occupies residues 336–344 (TQGRLDSFF). Residues 348–380 (GSLSSKRKEPEMKGSTKKKLKTGATAGKFKKGK) form a disordered region.

It belongs to the XPG/RAD2 endonuclease family. FEN1 subfamily. As to quaternary structure, interacts with PCNA. Three molecules of fen1 bind to one PCNA trimer with each molecule binding to one PCNA monomer. PCNA stimulates the nuclease activity without altering cleavage specificity. The cofactor is Mg(2+). In terms of processing, phosphorylated. Phosphorylation upon DNA damage induces relocalization to the nuclear plasma.

The protein localises to the nucleus. Its subcellular location is the nucleolus. The protein resides in the nucleoplasm. It localises to the mitochondrion. In terms of biological role, structure-specific nuclease with 5'-flap endonuclease and 5'-3' exonuclease activities involved in DNA replication and repair. During DNA replication, cleaves the 5'-overhanging flap structure that is generated by displacement synthesis when DNA polymerase encounters the 5'-end of a downstream Okazaki fragment. It enters the flap from the 5'-end and then tracks to cleave the flap base, leaving a nick for ligation. Also involved in the long patch base excision repair (LP-BER) pathway, by cleaving within the apurinic/apyrimidinic (AP) site-terminated flap. Acts as a genome stabilization factor that prevents flaps from equilibrating into structures that lead to duplications and deletions. Also possesses 5'-3' exonuclease activity on nicked or gapped double-stranded DNA, and exhibits RNase H activity. Also involved in replication and repair of rDNA and in repairing mitochondrial DNA. The sequence is that of Flap endonuclease 1 (fen1) from Osmerus mordax (Rainbow smelt).